The primary structure comprises 553 residues: Putative transport protein AHA_3492 (553 aa).

5 consecutive transmembrane segments (helical) span residues 4-24, 29-49, 65-85, 95-115, and 158-178; these read IALSISMLSLVAVLGLWLGNW, VGLGIGGVLFGGIIVGHFAGL, FGLILFVYTIGIQVGPGFFSS, GFAALLVLLGCAVAAALHQLF, and MGYAVAYPFGICGILLTMWLI. 2 consecutive RCK C-terminal domains span residues 191–276 and 279–361; these read AQFE…VLGE and ETSL…VVGN. A run of 6 helical transmembrane segments spans residues 371–391, 403–425, 439–459, 465–485, 493–513, and 533–553; these read MLPVFIGIGLGVLLGSIPFYL, AGGPLVVALILSRIGSIGKLYWF, IVLFLAVVGFKSGAGFIDTLI, AWMMYGVAITLIPLLVVGVLA, YLTLCGLLAGSMTDPPALAFA, and LVMFLRIISPQLLAILLWAGA.

The protein belongs to the AAE transporter (TC 2.A.81) family. YidE subfamily.

It is found in the cell membrane. In Aeromonas hydrophila subsp. hydrophila (strain ATCC 7966 / DSM 30187 / BCRC 13018 / CCUG 14551 / JCM 1027 / KCTC 2358 / NCIMB 9240 / NCTC 8049), this protein is Putative transport protein AHA_3492.